Consider the following 363-residue polypeptide: Fructose-1,6-bisphosphatase 1 (363 aa).

Val-2 bears the N-acetylvaline mark. AMP-binding positions include Val-18–Gly-22 and Thr-28–Thr-32. 2 residues coordinate Mg(2+): Asp-69 and Glu-98. Residue Lys-113–Tyr-114 participates in AMP binding. Residues Asp-119, Leu-121, and Asp-122 each coordinate Mg(2+). A substrate-binding site is contributed by Asp-122–Ser-125. Position 141 (Arg-141) interacts with AMP. Lys-151 carries the post-translational modification N6-succinyllysine. Substrate-binding positions include Asn-213–Tyr-216, Arg-244–Met-249, Tyr-265, and Lys-275–Arg-277. A phosphotyrosine mark is found at Tyr-216, Tyr-245, and Tyr-265. Glu-281 is a binding site for Mg(2+). Residues Ser-339 and Ser-353 each carry the phosphoserine modification.

It belongs to the FBPase class 1 family. In terms of assembly, homotetramer. It depends on Mg(2+) as a cofactor.

It catalyses the reaction beta-D-fructose 1,6-bisphosphate + H2O = beta-D-fructose 6-phosphate + phosphate. Its pathway is carbohydrate biosynthesis; gluconeogenesis. Its activity is regulated as follows. Subject to complex allosteric regulation. The enzyme can assume an active R-state, or an inactive T-state. Intermediate conformations may exist. AMP acts as an allosteric inhibitor. AMP binding affects the turnover of bound substrate and not the affinity for substrate. Fructose 2,6-bisphosphate acts as a competitive inhibitor. Fructose 2,6-bisphosphate and AMP have synergistic effects. In terms of biological role, catalyzes the hydrolysis of fructose 1,6-bisphosphate to fructose 6-phosphate in the presence of divalent cations, acting as a rate-limiting enzyme in gluconeogenesis. Plays a role in regulating glucose sensing and insulin secretion of pancreatic beta-cells. Appears to modulate glycerol gluconeogenesis in liver. Important regulator of appetite and adiposity; increased expression of the protein in liver after nutrient excess increases circulating satiety hormones and reduces appetite-stimulating neuropeptides and thus seems to provide a feedback mechanism to limit weight gain. The polypeptide is Fructose-1,6-bisphosphatase 1 (Fbp1) (Rattus norvegicus (Rat)).